Consider the following 285-residue polypeptide: HTH-type transcriptional regulator MurR (285 aa).

In terms of domain architecture, HTH rpiR-type spans 1-77; that stretch reads MLYLTKIRNA…MALIGEYSAS (77 aa). Positions 37 to 56 form a DNA-binding region, H-T-H motif; sequence SRQMAKQLGISQSSIVKFAQ. In terms of domain architecture, SIS spans 128–268; the sequence is IIEVISKAPF…FVGLVQLNDV (141 aa).

As to quaternary structure, homotetramer.

It functions in the pathway amino-sugar metabolism; N-acetylmuramate degradation [regulation]. Its function is as follows. Represses the expression of the murPQ operon involved in the uptake and degradation of N-acetylmuramic acid (MurNAc). Binds to two adjacent inverted repeats within the operator region. MurNAc 6-phosphate, the substrate of MurQ, is the specific inducer that weakens binding of MurR to the operator. The polypeptide is HTH-type transcriptional regulator MurR (Escherichia coli (strain ATCC 8739 / DSM 1576 / NBRC 3972 / NCIMB 8545 / WDCM 00012 / Crooks)).